A 251-amino-acid chain; its full sequence is Hydroxyacylglutathione hydrolase (251 aa).

7 residues coordinate Zn(2+): His-58, His-60, Asp-62, His-63, His-116, Asp-135, and His-173.

It belongs to the metallo-beta-lactamase superfamily. Glyoxalase II family. As to quaternary structure, monomer. Zn(2+) serves as cofactor.

It carries out the reaction an S-(2-hydroxyacyl)glutathione + H2O = a 2-hydroxy carboxylate + glutathione + H(+). It participates in secondary metabolite metabolism; methylglyoxal degradation; (R)-lactate from methylglyoxal: step 2/2. In terms of biological role, thiolesterase that catalyzes the hydrolysis of S-D-lactoyl-glutathione to form glutathione and D-lactic acid. The protein is Hydroxyacylglutathione hydrolase of Bdellovibrio bacteriovorus (strain ATCC 15356 / DSM 50701 / NCIMB 9529 / HD100).